The chain runs to 550 residues: Chaperonin GroEL (550 aa).

Residues 30-33 (TLGP), lysine 51, 87-91 (DGTTT), glycine 415, and aspartate 496 contribute to the ATP site.

The protein belongs to the chaperonin (HSP60) family. As to quaternary structure, forms a cylinder of 14 subunits composed of two heptameric rings stacked back-to-back. Interacts with the co-chaperonin GroES.

It localises to the cytoplasm. It catalyses the reaction ATP + H2O + a folded polypeptide = ADP + phosphate + an unfolded polypeptide.. In terms of biological role, together with its co-chaperonin GroES, plays an essential role in assisting protein folding. The GroEL-GroES system forms a nano-cage that allows encapsulation of the non-native substrate proteins and provides a physical environment optimized to promote and accelerate protein folding. The sequence is that of Chaperonin GroEL from Rickettsia prowazekii (strain Madrid E).